Reading from the N-terminus, the 459-residue chain is Palmitoyltransferase PFA4 (459 aa).

Over 1–9 (MAARNWSRV) the chain is Cytoplasmic. The chain crosses the membrane as a helical span at residues 10–30 (WVGGTVILISFIAFSSQIFVI). Residues 31 to 37 (WPWYGRE) are Lumenal-facing. Residues 38–58 (ISLDLLKLLVPLNLAAFMIFW) form a helical membrane-spanning segment. At 59–138 (NYRLCVITSP…GNCVGFYNQG (80 aa)) the chain is on the cytoplasmic side. In terms of domain architecture, DHHC spans 95–145 (RYCKNCEHYKPPRAHHCRQCKTCWLKLDHHCPWIGNCVGFYNQGHFIRFLL). Cysteine 125 (S-palmitoyl cysteine intermediate) is an active-site residue. Residues 139–159 (HFIRFLLWVDIGTTFHLIIMV) form a helical membrane-spanning segment. Residues 160 to 177 (RRVLYIAEYYHQEPTLAD) lie on the Lumenal side of the membrane. Residues 178 to 198 (VLFLVFNFATCVPVWLCVGMF) form a helical membrane-spanning segment. The Cytoplasmic segment spans residues 199–459 (SIYHVYLACG…DTEEESGYAH (261 aa)). Residues 278–379 (HTTQYFWPPQ…DYDHYDEGPM (102 aa)) are disordered. A compositionally biased stretch (pro residues) spans 286-299 (PQDPSRLPNPPPIP). Positions 310 to 322 (NGFNPNLQPTNSL) are enriched in polar residues. The segment covering 331–356 (HIDEDEHSHERDQYRHYSSGEERDND) has biased composition (basic and acidic residues).

It belongs to the DHHC palmitoyltransferase family. PFA4 subfamily.

It is found in the endoplasmic reticulum membrane. The catalysed reaction is L-cysteinyl-[protein] + hexadecanoyl-CoA = S-hexadecanoyl-L-cysteinyl-[protein] + CoA. Its function is as follows. Mediates the reversible addition of palmitate to target proteins, thereby regulating their membrane association and biological function. This is Palmitoyltransferase PFA4 from Cryptococcus neoformans var. neoformans serotype D (strain B-3501A) (Filobasidiella neoformans).